The primary structure comprises 147 residues: Antiholin-like protein LrgA (147 aa).

4 helical membrane-spanning segments follow: residues 12-32 (PAHF…SKII), 35-55 (FMPI…VLLC), 74-94 (NIGL…GVIS), and 98-118 (FLII…TGYV).

The protein belongs to the CidA/LrgA family. LrgA subfamily.

It localises to the cell membrane. Its function is as follows. Inhibits the expression or activity of extracellular murein hydrolases by interacting, possibly with LrgB, with the holin-like proteins CidA and/or CidB. The LrgAB and CidAB proteins may affect the proton motive force of the membrane. May be involved in programmed cell death (PCD), possibly triggering PCD in response to antibiotics and environmental stresses. The polypeptide is Antiholin-like protein LrgA (Staphylococcus aureus (strain USA300)).